We begin with the raw amino-acid sequence, 213 residues long: Orotate phosphoribosyltransferase (213 aa).

5-phospho-alpha-D-ribose 1-diphosphate is bound at residue Lys-26. Residue 34–35 (FF) coordinates orotate. Residues 72–73 (YK), Arg-99, Lys-100, Lys-103, His-105, and 124–132 (DDVITAGTA) each bind 5-phospho-alpha-D-ribose 1-diphosphate. Residues Thr-128 and Arg-156 each contribute to the orotate site.

This sequence belongs to the purine/pyrimidine phosphoribosyltransferase family. PyrE subfamily. Homodimer. Mg(2+) is required as a cofactor.

It carries out the reaction orotidine 5'-phosphate + diphosphate = orotate + 5-phospho-alpha-D-ribose 1-diphosphate. It participates in pyrimidine metabolism; UMP biosynthesis via de novo pathway; UMP from orotate: step 1/2. In terms of biological role, catalyzes the transfer of a ribosyl phosphate group from 5-phosphoribose 1-diphosphate to orotate, leading to the formation of orotidine monophosphate (OMP). This is Orotate phosphoribosyltransferase from Haemophilus ducreyi (strain 35000HP / ATCC 700724).